The following is a 957-amino-acid chain: Glycine dehydrogenase (decarboxylating) (957 aa).

Lysine 708 is subject to N6-(pyridoxal phosphate)lysine.

It belongs to the GcvP family. The glycine cleavage system is composed of four proteins: P, T, L and H. Pyridoxal 5'-phosphate is required as a cofactor.

It carries out the reaction N(6)-[(R)-lipoyl]-L-lysyl-[glycine-cleavage complex H protein] + glycine + H(+) = N(6)-[(R)-S(8)-aminomethyldihydrolipoyl]-L-lysyl-[glycine-cleavage complex H protein] + CO2. The glycine cleavage system catalyzes the degradation of glycine. The P protein binds the alpha-amino group of glycine through its pyridoxal phosphate cofactor; CO(2) is released and the remaining methylamine moiety is then transferred to the lipoamide cofactor of the H protein. The chain is Glycine dehydrogenase (decarboxylating) from Shigella dysenteriae serotype 1 (strain Sd197).